The chain runs to 339 residues: Anthranilate phosphoribosyltransferase (339 aa).

5-phospho-alpha-D-ribose 1-diphosphate is bound by residues G81, 84–85 (GD), S89, 91–94 (NVST), 109–117 (KHGNRALSS), and A121. Residue G81 coordinates anthranilate. Residue S93 participates in Mg(2+) binding. N112 contributes to the anthranilate binding site. R167 contacts anthranilate. Mg(2+)-binding residues include D226 and E227.

The protein belongs to the anthranilate phosphoribosyltransferase family. As to quaternary structure, homodimer. It depends on Mg(2+) as a cofactor.

It carries out the reaction N-(5-phospho-beta-D-ribosyl)anthranilate + diphosphate = 5-phospho-alpha-D-ribose 1-diphosphate + anthranilate. The protein operates within amino-acid biosynthesis; L-tryptophan biosynthesis; L-tryptophan from chorismate: step 2/5. In terms of biological role, catalyzes the transfer of the phosphoribosyl group of 5-phosphorylribose-1-pyrophosphate (PRPP) to anthranilate to yield N-(5'-phosphoribosyl)-anthranilate (PRA). The sequence is that of Anthranilate phosphoribosyltransferase from Rhodopseudomonas palustris (strain BisB18).